The chain runs to 394 residues: Phosphoglycerate kinase (394 aa).

Substrate contacts are provided by residues 21 to 23, Arg36, 59 to 62, Arg118, and Arg151; these read DFN and HLGR. Ser183 carries the post-translational modification Phosphoserine. ATP-binding residues include Lys201 and Gly292. Thr299 carries the post-translational modification Phosphothreonine. Residues Glu323 and 350–353 each bind ATP; that span reads GGDS.

It belongs to the phosphoglycerate kinase family. In terms of assembly, monomer.

It localises to the cytoplasm. It catalyses the reaction (2R)-3-phosphoglycerate + ATP = (2R)-3-phospho-glyceroyl phosphate + ADP. It functions in the pathway carbohydrate degradation; glycolysis; pyruvate from D-glyceraldehyde 3-phosphate: step 2/5. The chain is Phosphoglycerate kinase from Bacillus thuringiensis subsp. konkukian (strain 97-27).